The chain runs to 25 residues: Omega-conotoxin MVIIB (25 aa).

Intrachain disulfides connect cysteine 1–cysteine 16, cysteine 8–cysteine 20, and cysteine 15–cysteine 25. Cysteine amide is present on cysteine 25.

This sequence belongs to the conotoxin O1 superfamily. As to expression, expressed by the venom duct.

The protein resides in the secreted. Omega-conotoxins act at presynaptic membranes, they bind and block voltage-gated calcium channels (Cav). The polypeptide is Omega-conotoxin MVIIB (Conus magus (Magical cone)).